Consider the following 140-residue polypeptide: D-ribose pyranase (140 aa).

The active-site Proton donor is His20. Substrate contacts are provided by residues Asp28, His99, and Tyr121 to Ser123.

Belongs to the RbsD / FucU family. RbsD subfamily. In terms of assembly, homodecamer.

Its subcellular location is the cytoplasm. The enzyme catalyses beta-D-ribopyranose = beta-D-ribofuranose. The protein operates within carbohydrate metabolism; D-ribose degradation; D-ribose 5-phosphate from beta-D-ribopyranose: step 1/2. In terms of biological role, catalyzes the interconversion of beta-pyran and beta-furan forms of D-ribose. This Pseudothermotoga lettingae (strain ATCC BAA-301 / DSM 14385 / NBRC 107922 / TMO) (Thermotoga lettingae) protein is D-ribose pyranase.